We begin with the raw amino-acid sequence, 478 residues long: MELLTFTCCPFEGQMQQKKRRFDANLVQLQESEHRNDQINETVDAELTNECWKLYMRLKPSNEEVSRRQQFVDKLRTILSTEIKDAKLDLFVFGSTENNLAIQQSDVDVCIITNGSKYLNSTCQLAQLLYSYGMKQIVCVSRARVPIVKIWDPQFDIHCDLNINNDVAKINTKMLRLFVSIDPRVRPLGLIIKYWAKQRALCDAAGSGTITSYTISCMLVNFLQTRNPPILPAMLDLMSNDDNKMFVDDIVGFKEKATLNKTSLGRLLIDFFYYYGFSFNYLDSVVSVRSGTVLNKQEKGWAMEVNNSLCVEEPFNTARNLANTADNPSVKGLQSEFQRAFRLMSENNACERLCKICEEYQFLDITNEANYGNTNTPFNTAYESFGCNHTVLPEAAAYPKPYYPPQITLSDGGNMNFLYYIPDESNHQSYENKANRDSDFQGQTSLTQGSAPPWHYIPCQSWLVWYPSEDASNPASGN.

Positions 106 and 108 each coordinate Mg(2+). The PAP-associated domain occupies serine 263–threonine 317. The segment at glutamine 428–threonine 447 is disordered.

Belongs to the DNA polymerase type-B-like family. Mg(2+) is required as a cofactor. Requires Mn(2+) as cofactor.

It is found in the cytoplasm. It localises to the nucleus. It catalyses the reaction RNA(n) + ATP = RNA(n)-3'-adenine ribonucleotide + diphosphate. The chain is Poly(A) RNA polymerase cid11 (cid11) from Schizosaccharomyces pombe (strain 972 / ATCC 24843) (Fission yeast).